A 621-amino-acid chain; its full sequence is UvrABC system protein C (621 aa).

A GIY-YIG domain is found at 20–106 (TQSGIYQFFD…IKSLKPKYNI (87 aa)). The UVR domain maps to 212 to 247 (KALLKILESKMHTLSHNLQFEEAAIMRDRIQKITQM).

Belongs to the UvrC family. As to quaternary structure, interacts with UvrB in an incision complex.

The protein resides in the cytoplasm. In terms of biological role, the UvrABC repair system catalyzes the recognition and processing of DNA lesions. UvrC both incises the 5' and 3' sides of the lesion. The N-terminal half is responsible for the 3' incision and the C-terminal half is responsible for the 5' incision. The polypeptide is UvrABC system protein C (Helicobacter hepaticus (strain ATCC 51449 / 3B1)).